The sequence spans 258 residues: Heat-labile enterotoxin A chain (258 aa).

The first 18 residues, 1-18 (MKNITFIFFILLASPLYA), serve as a signal peptide directing secretion. Residue 25–39 (RADSRPPDEIKRSGG) participates in NAD(+) binding. Residue glutamate 128 is part of the active site. Cysteine 205 and cysteine 217 are disulfide-bonded.

The protein belongs to the enterotoxin A family. As to quaternary structure, heterohexamer of one A chain and of five B chains.

In terms of biological role, the biological activity of the toxin is produced by the A chain, which activates intracellular adenyl cyclase. This chain is Heat-labile enterotoxin A chain (eltA), found in Escherichia coli O78:H11 (strain H10407 / ETEC).